The chain runs to 329 residues: Biotin synthase (329 aa).

Residues 48 to 278 enclose the Radical SAM core domain; it reads FVGDKVFLCS…TKRISICGGR (231 aa). Residues C66, C70, and C73 each contribute to the [4Fe-4S] cluster site. The [2Fe-2S] cluster site is built by S143 and C203.

This sequence belongs to the radical SAM superfamily. Biotin synthase family. As to quaternary structure, homodimer. [4Fe-4S] cluster serves as cofactor. [2Fe-2S] cluster is required as a cofactor.

It catalyses the reaction (4R,5S)-dethiobiotin + (sulfur carrier)-SH + 2 reduced [2Fe-2S]-[ferredoxin] + 2 S-adenosyl-L-methionine = (sulfur carrier)-H + biotin + 2 5'-deoxyadenosine + 2 L-methionine + 2 oxidized [2Fe-2S]-[ferredoxin]. It functions in the pathway cofactor biosynthesis; biotin biosynthesis; biotin from 7,8-diaminononanoate: step 2/2. Its function is as follows. Catalyzes the conversion of dethiobiotin (DTB) to biotin by the insertion of a sulfur atom into dethiobiotin via a radical-based mechanism. The sequence is that of Biotin synthase from Geotalea daltonii (strain DSM 22248 / JCM 15807 / FRC-32) (Geobacter daltonii).